Consider the following 440-residue polypeptide: tRNA(Ile)-lysidine synthase (440 aa).

25 to 30 is an ATP binding site; the sequence is SGGVDS.

It belongs to the tRNA(Ile)-lysidine synthase family.

It localises to the cytoplasm. It carries out the reaction cytidine(34) in tRNA(Ile2) + L-lysine + ATP = lysidine(34) in tRNA(Ile2) + AMP + diphosphate + H(+). In terms of biological role, ligates lysine onto the cytidine present at position 34 of the AUA codon-specific tRNA(Ile) that contains the anticodon CAU, in an ATP-dependent manner. Cytidine is converted to lysidine, thus changing the amino acid specificity of the tRNA from methionine to isoleucine. This is tRNA(Ile)-lysidine synthase from Vibrio cholerae serotype O1 (strain ATCC 39541 / Classical Ogawa 395 / O395).